Reading from the N-terminus, the 314-residue chain is Small ribosomal subunit biogenesis GTPase RsgA (314 aa).

The interval 1 to 21 (MKRAPTKQPAKPAARGGERAQ) is disordered. In terms of domain architecture, CP-type G spans 85–246 (SDQFKSKLFA…LIDSPGFQEF (162 aa)). Residues 134-137 (NKID) and 188-196 (GQSGMGKST) each bind GTP. The Zn(2+) site is built by cysteine 270, cysteine 275, histidine 277, and cysteine 283.

Belongs to the TRAFAC class YlqF/YawG GTPase family. RsgA subfamily. Monomer. Associates with 30S ribosomal subunit, binds 16S rRNA. It depends on Zn(2+) as a cofactor.

The protein localises to the cytoplasm. Its function is as follows. One of several proteins that assist in the late maturation steps of the functional core of the 30S ribosomal subunit. Helps release RbfA from mature subunits. May play a role in the assembly of ribosomal proteins into the subunit. Circularly permuted GTPase that catalyzes slow GTP hydrolysis, GTPase activity is stimulated by the 30S ribosomal subunit. The sequence is that of Small ribosomal subunit biogenesis GTPase RsgA from Burkholderia mallei (strain ATCC 23344).